The chain runs to 208 residues: N-(5'-phosphoribosyl)anthranilate isomerase (208 aa).

It belongs to the TrpF family.

It catalyses the reaction N-(5-phospho-beta-D-ribosyl)anthranilate = 1-(2-carboxyphenylamino)-1-deoxy-D-ribulose 5-phosphate. It participates in amino-acid biosynthesis; L-tryptophan biosynthesis; L-tryptophan from chorismate: step 3/5. The polypeptide is N-(5'-phosphoribosyl)anthranilate isomerase (Neisseria meningitidis serogroup C / serotype 2a (strain ATCC 700532 / DSM 15464 / FAM18)).